The primary structure comprises 530 residues: Hyalin (530 aa).

HYR domains lie at 1 to 66, 67 to 150, 151 to 234, 235 to 319, 320 to 403, 404 to 486, and 487 to 530; these read NVEI…TVTA, TDSI…NVVE, VDTT…NVVE, VDTT…NIVE, EDTT…TVNT, and VDTT…ASLV.

Homooligomer in presence of calcium. In terms of processing, glycosylated.

The protein localises to the secreted. It is found in the extracellular space. Its subcellular location is the extracellular matrix. Functionally, major constituent of the hyaline layer. The hyaline layer of echinoderm embryos is an extraembryonic matrix that functions as a substrate for cell adhesion through early development. The protein is Hyalin of Lytechinus variegatus (Green sea urchin).